The sequence spans 171 residues: Odorant-binding protein 1b (171 aa).

The first 19 residues, 1–19 (MMVKFLLLALVFGLAHVHA), serve as a signal peptide directing secretion. Cystine bridges form between Cys57–Cys61 and Cys76–Cys169.

It belongs to the calycin superfamily. Lipocalin family. As to quaternary structure, may form a heterodimer with OBP1A. The N-terminus may be blocked. Expressed in nasal mucosa (at protein level). Specifically detected in septal and lateral nasal glands.

The protein localises to the secreted. In terms of biological role, binds the chemical odorant 2-isobutyl-3-methoxypyrazine. The sequence is that of Odorant-binding protein 1b from Mus musculus (Mouse).